Consider the following 59-residue polypeptide: Large ribosomal subunit protein bL32 (59 aa).

Basic residues predominate over residues 1 to 16 (MAVPKRKTSPSKRGMR). Residues 1 to 59 (MAVPKRKTSPSKRGMRRSADALKAPTYIEDKNSGELRRPHHIDLKTGMYRGRSVLPPKD) are disordered. Basic and acidic residues predominate over residues 28–44 (IEDKNSGELRRPHHIDL).

Belongs to the bacterial ribosomal protein bL32 family.

In Bartonella quintana (strain Toulouse) (Rochalimaea quintana), this protein is Large ribosomal subunit protein bL32.